Consider the following 257-residue polypeptide: DNA repair protein RecO (257 aa).

Belongs to the RecO family.

Involved in DNA repair and RecF pathway recombination. In Streptococcus thermophilus (strain CNRZ 1066), this protein is DNA repair protein RecO.